A 418-amino-acid chain; its full sequence is NADH-quinone oxidoreductase subunit D (418 aa).

Belongs to the complex I 49 kDa subunit family. As to quaternary structure, NDH-1 is composed of 14 different subunits. Subunits NuoB, C, D, E, F, and G constitute the peripheral sector of the complex.

The protein resides in the cell inner membrane. The enzyme catalyses a quinone + NADH + 5 H(+)(in) = a quinol + NAD(+) + 4 H(+)(out). In terms of biological role, NDH-1 shuttles electrons from NADH, via FMN and iron-sulfur (Fe-S) centers, to quinones in the respiratory chain. The immediate electron acceptor for the enzyme in this species is believed to be ubiquinone. Couples the redox reaction to proton translocation (for every two electrons transferred, four hydrogen ions are translocated across the cytoplasmic membrane), and thus conserves the redox energy in a proton gradient. In Neisseria meningitidis serogroup A / serotype 4A (strain DSM 15465 / Z2491), this protein is NADH-quinone oxidoreductase subunit D.